Here is a 242-residue protein sequence, read N- to C-terminus: Segregation and condensation protein A (242 aa).

The protein belongs to the ScpA family. Component of a cohesin-like complex composed of ScpA, ScpB and the Smc homodimer, in which ScpA and ScpB bind to the head domain of Smc. The presence of the three proteins is required for the association of the complex with DNA.

It is found in the cytoplasm. Its function is as follows. Participates in chromosomal partition during cell division. May act via the formation of a condensin-like complex containing Smc and ScpB that pull DNA away from mid-cell into both cell halves. The chain is Segregation and condensation protein A from Lactococcus lactis subsp. cremoris (strain MG1363).